The chain runs to 553 residues: CTP synthase (553 aa).

The tract at residues 1–270 (MTKYVFVTGG…DRLICEELRL (270 aa)) is amidoligase domain. Residue S13 participates in CTP binding. Residue S13 coordinates UTP. ATP is bound by residues 14-19 (SLGKGI) and D71. Mg(2+) is bound by residues D71 and E144. CTP is bound by residues 151 to 153 (DIE), 191 to 196 (KTKPTQ), and K227. Residues 191-196 (KTKPTQ) and K227 each bind UTP. The 253-residue stretch at 295–547 (TIGMVGKYVD…VQAALACQQT (253 aa)) folds into the Glutamine amidotransferase type-1 domain. G356 contributes to the L-glutamine binding site. C383 (nucleophile; for glutamine hydrolysis) is an active-site residue. L-glutamine-binding positions include 384-387 (LGMQ), E407, and R473. Active-site residues include H520 and E522.

Belongs to the CTP synthase family. In terms of assembly, homotetramer.

It catalyses the reaction UTP + L-glutamine + ATP + H2O = CTP + L-glutamate + ADP + phosphate + 2 H(+). The enzyme catalyses L-glutamine + H2O = L-glutamate + NH4(+). It carries out the reaction UTP + NH4(+) + ATP = CTP + ADP + phosphate + 2 H(+). It participates in pyrimidine metabolism; CTP biosynthesis via de novo pathway; CTP from UDP: step 2/2. With respect to regulation, allosterically activated by GTP, when glutamine is the substrate; GTP has no effect on the reaction when ammonia is the substrate. The allosteric effector GTP functions by stabilizing the protein conformation that binds the tetrahedral intermediate(s) formed during glutamine hydrolysis. Inhibited by the product CTP, via allosteric rather than competitive inhibition. Catalyzes the ATP-dependent amination of UTP to CTP with either L-glutamine or ammonia as the source of nitrogen. Regulates intracellular CTP levels through interactions with the four ribonucleotide triphosphates. This is CTP synthase from Burkholderia mallei (strain NCTC 10247).